Consider the following 100-residue polypeptide: Urease subunit gamma (100 aa).

Belongs to the urease gamma subunit family. Heterotrimer of UreA (gamma), UreB (beta) and UreC (alpha) subunits. Three heterotrimers associate to form the active enzyme.

The protein resides in the cytoplasm. The enzyme catalyses urea + 2 H2O + H(+) = hydrogencarbonate + 2 NH4(+). Its pathway is nitrogen metabolism; urea degradation; CO(2) and NH(3) from urea (urease route): step 1/1. This chain is Urease subunit gamma, found in Paraburkholderia phytofirmans (strain DSM 17436 / LMG 22146 / PsJN) (Burkholderia phytofirmans).